A 343-amino-acid chain; its full sequence is Ribosomal RNA small subunit methyltransferase C (343 aa).

Belongs to the methyltransferase superfamily. RsmC family. Monomer.

It localises to the cytoplasm. It catalyses the reaction guanosine(1207) in 16S rRNA + S-adenosyl-L-methionine = N(2)-methylguanosine(1207) in 16S rRNA + S-adenosyl-L-homocysteine + H(+). Specifically methylates the guanine in position 1207 of 16S rRNA in the 30S particle. In Escherichia coli (strain ATCC 8739 / DSM 1576 / NBRC 3972 / NCIMB 8545 / WDCM 00012 / Crooks), this protein is Ribosomal RNA small subunit methyltransferase C.